The following is a 335-amino-acid chain: Glycerol-3-phosphate dehydrogenase [NAD(P)+] (335 aa).

NADPH is bound by residues Trp-12 and Lys-106. The sn-glycerol 3-phosphate site is built by Lys-106, Gly-136, and Ser-138. NADPH is bound at residue Ala-140. Sn-glycerol 3-phosphate-binding residues include Lys-191, Asp-244, Ser-254, Arg-255, and Asn-256. The active-site Proton acceptor is Lys-191. Arg-255 lines the NADPH pocket. NADPH is bound by residues Val-279 and Glu-281.

Belongs to the NAD-dependent glycerol-3-phosphate dehydrogenase family.

The protein localises to the cytoplasm. The catalysed reaction is sn-glycerol 3-phosphate + NAD(+) = dihydroxyacetone phosphate + NADH + H(+). The enzyme catalyses sn-glycerol 3-phosphate + NADP(+) = dihydroxyacetone phosphate + NADPH + H(+). Its pathway is membrane lipid metabolism; glycerophospholipid metabolism. In terms of biological role, catalyzes the reduction of the glycolytic intermediate dihydroxyacetone phosphate (DHAP) to sn-glycerol 3-phosphate (G3P), the key precursor for phospholipid synthesis. In Fusobacterium nucleatum subsp. nucleatum (strain ATCC 25586 / DSM 15643 / BCRC 10681 / CIP 101130 / JCM 8532 / KCTC 2640 / LMG 13131 / VPI 4355), this protein is Glycerol-3-phosphate dehydrogenase [NAD(P)+].